The primary structure comprises 43 residues: Protein PsbN (43 aa).

Residues 5-27 (TLVAIPISCLLVSFTGYALYTAF) form a helical membrane-spanning segment.

It belongs to the PsbN family.

It localises to the plastid. It is found in the chloroplast thylakoid membrane. Its function is as follows. May play a role in photosystem I and II biogenesis. This chain is Protein PsbN, found in Sphagnum cuspidatum (Bog moss).